We begin with the raw amino-acid sequence, 954 residues long: Glycine dehydrogenase (decarboxylating) (954 aa).

An N6-(pyridoxal phosphate)lysine modification is found at Lys-702.

The protein belongs to the GcvP family. The glycine cleavage system is composed of four proteins: P, T, L and H. Pyridoxal 5'-phosphate serves as cofactor.

It catalyses the reaction N(6)-[(R)-lipoyl]-L-lysyl-[glycine-cleavage complex H protein] + glycine + H(+) = N(6)-[(R)-S(8)-aminomethyldihydrolipoyl]-L-lysyl-[glycine-cleavage complex H protein] + CO2. Its function is as follows. The glycine cleavage system catalyzes the degradation of glycine. The P protein binds the alpha-amino group of glycine through its pyridoxal phosphate cofactor; CO(2) is released and the remaining methylamine moiety is then transferred to the lipoamide cofactor of the H protein. This chain is Glycine dehydrogenase (decarboxylating), found in Xanthomonas euvesicatoria pv. vesicatoria (strain 85-10) (Xanthomonas campestris pv. vesicatoria).